Reading from the N-terminus, the 278-residue chain is Cation-dependent mannose-6-phosphate receptor (278 aa).

Residues 1–21 form the signal peptide; sequence MFPFSGCWRTELLLLLLLAVA. Residues 22–186 lie on the Lumenal side of the membrane; that stretch reads VRESWQIEEK…SLACSPEVSH (165 aa). Residues 31–182 form the MRH domain; it reads KSCDLVGEKD…EMDSSLACSP (152 aa). An intrachain disulfide couples cysteine 33 to cysteine 79. 5 N-linked (GlcNAc...) asparagine glycosylation sites follow: asparagine 58, asparagine 84, asparagine 95, asparagine 108, and asparagine 114. 2 disulfide bridges follow: cysteine 133/cysteine 168 and cysteine 146/cysteine 180. A helical membrane pass occupies residues 187–211; it reads LSVGSILLVIFASLVAVYIIGGFLY. The Cytoplasmic portion of the chain corresponds to 212–278; the sequence is QRLVVGAKGM…EERDDHLLPM (67 aa). A disordered region spans residues 257-278; it reads RGVGDDQLGEESEERDDHLLPM. Residue serine 268 is modified to Phosphoserine.

As to quaternary structure, homodimer. Binds GGA1, GGA2 and GGA3.

It is found in the lysosome membrane. Functionally, transport of phosphorylated lysosomal enzymes from the Golgi complex and the cell surface to lysosomes. Lysosomal enzymes bearing phosphomannosyl residues bind specifically to mannose-6-phosphate receptors in the Golgi apparatus and the resulting receptor-ligand complex is transported to an acidic prelyosomal compartment where the low pH mediates the dissociation of the complex. The polypeptide is Cation-dependent mannose-6-phosphate receptor (M6pr) (Mus musculus (Mouse)).